A 408-amino-acid chain; its full sequence is Peptidase T (408 aa).

Residue H78 participates in Zn(2+) binding. The active site involves D80. Zn(2+) is bound at residue D141. E175 functions as the Proton acceptor in the catalytic mechanism. Zn(2+) is bound by residues E176, D198, and H380.

Belongs to the peptidase M20B family. Zn(2+) serves as cofactor.

The protein localises to the cytoplasm. The enzyme catalyses Release of the N-terminal residue from a tripeptide.. Functionally, cleaves the N-terminal amino acid of tripeptides. This is Peptidase T from Clostridium acetobutylicum (strain ATCC 824 / DSM 792 / JCM 1419 / IAM 19013 / LMG 5710 / NBRC 13948 / NRRL B-527 / VKM B-1787 / 2291 / W).